The chain runs to 333 residues: Anthranilate phosphoribosyltransferase (333 aa).

5-phospho-alpha-D-ribose 1-diphosphate-binding positions include Gly-80, 83–84 (GD), Thr-88, 90–93 (NLST), 108–116 (KHGNRSASG), and Ser-120. Residue Gly-80 coordinates anthranilate. Ser-92 is a binding site for Mg(2+). Position 111 (Asn-111) interacts with anthranilate. Anthranilate is bound at residue Arg-166. Mg(2+) contacts are provided by Asp-224 and Glu-225.

This sequence belongs to the anthranilate phosphoribosyltransferase family. In terms of assembly, homodimer. It depends on Mg(2+) as a cofactor.

It catalyses the reaction N-(5-phospho-beta-D-ribosyl)anthranilate + diphosphate = 5-phospho-alpha-D-ribose 1-diphosphate + anthranilate. It functions in the pathway amino-acid biosynthesis; L-tryptophan biosynthesis; L-tryptophan from chorismate: step 2/5. In terms of biological role, catalyzes the transfer of the phosphoribosyl group of 5-phosphorylribose-1-pyrophosphate (PRPP) to anthranilate to yield N-(5'-phosphoribosyl)-anthranilate (PRA). In Pyrobaculum arsenaticum (strain DSM 13514 / JCM 11321 / PZ6), this protein is Anthranilate phosphoribosyltransferase.